Here is a 246-residue protein sequence, read N- to C-terminus: 5'-nucleotidase SurE (246 aa).

4 residues coordinate a divalent metal cation: Asp-8, Asp-9, Ser-39, and Asn-91.

The protein belongs to the SurE nucleotidase family. A divalent metal cation is required as a cofactor.

The protein localises to the cytoplasm. The catalysed reaction is a ribonucleoside 5'-phosphate + H2O = a ribonucleoside + phosphate. Its function is as follows. Nucleotidase that shows phosphatase activity on nucleoside 5'-monophosphates. The protein is 5'-nucleotidase SurE of Histophilus somni (strain 129Pt) (Haemophilus somnus).